The primary structure comprises 371 residues: D-erythrose-4-phosphate dehydrogenase (371 aa).

Position 12–13 (Arg12–Ile13) interacts with NAD(+). Substrate contacts are provided by residues Ser154–Thr156, Arg200, Thr213–Lys214, and Arg236. Cys155 serves as the catalytic Nucleophile. An NAD(+)-binding site is contributed by Asn318.

Belongs to the glyceraldehyde-3-phosphate dehydrogenase family. Epd subfamily. As to quaternary structure, homotetramer.

The protein resides in the cytoplasm. It carries out the reaction D-erythrose 4-phosphate + NAD(+) + H2O = 4-phospho-D-erythronate + NADH + 2 H(+). It functions in the pathway cofactor biosynthesis; pyridoxine 5'-phosphate biosynthesis; pyridoxine 5'-phosphate from D-erythrose 4-phosphate: step 1/5. Its function is as follows. Catalyzes the NAD-dependent conversion of D-erythrose 4-phosphate to 4-phosphoerythronate. The protein is D-erythrose-4-phosphate dehydrogenase of Psychromonas ingrahamii (strain DSM 17664 / CCUG 51855 / 37).